The following is a 111-amino-acid chain: uncharacterized protein (111 aa).

It belongs to the UPF0440 family.

This is an uncharacterized protein from Pyrococcus furiosus (strain ATCC 43587 / DSM 3638 / JCM 8422 / Vc1).